We begin with the raw amino-acid sequence, 83 residues long: Small ribosomal subunit protein bS18 (83 aa).

This sequence belongs to the bacterial ribosomal protein bS18 family. Part of the 30S ribosomal subunit. Forms a tight heterodimer with protein bS6.

Its function is as follows. Binds as a heterodimer with protein bS6 to the central domain of the 16S rRNA, where it helps stabilize the platform of the 30S subunit. This chain is Small ribosomal subunit protein bS18, found in Methylobacterium sp. (strain 4-46).